A 75-amino-acid chain; its full sequence is UPF0352 protein YejL (75 aa).

It belongs to the UPF0352 family.

The sequence is that of UPF0352 protein YejL from Escherichia coli O127:H6 (strain E2348/69 / EPEC).